Here is a 278-residue protein sequence, read N- to C-terminus: HTH-type transcriptional activator RhaS (278 aa).

The region spanning 174–272 is the HTH araC/xylS-type domain; sequence NQLMAWLEEH…NWSPRDIRQG (99 aa). DNA-binding regions (H-T-H motif) lie at residues 191–212 and 239–262; these read EAVAEQFSLSLRTLHRQLKQHT and VTEIAYRCGFGDSNHFSTLFRREF.

In terms of assembly, binds DNA as a dimer.

The protein resides in the cytoplasm. Activates expression of the rhaBAD and rhaT operons. This is HTH-type transcriptional activator RhaS from Salmonella schwarzengrund (strain CVM19633).